The following is a 383-amino-acid chain: tRNA-specific 2-thiouridylase MnmA (383 aa).

ATP-binding positions include 30-37 (GMSGGVDS) and M56. Positions 116–118 (NPD) are interaction with target base in tRNA. C121 serves as the catalytic Nucleophile. An intrachain disulfide couples C121 to C218. G146 is an ATP binding site. The interval 168–170 (KDQ) is interaction with tRNA. The active-site Cysteine persulfide intermediate is the C218. The tract at residues 330 to 331 (RY) is interaction with tRNA.

Belongs to the MnmA/TRMU family.

The protein localises to the cytoplasm. The enzyme catalyses S-sulfanyl-L-cysteinyl-[protein] + uridine(34) in tRNA + AH2 + ATP = 2-thiouridine(34) in tRNA + L-cysteinyl-[protein] + A + AMP + diphosphate + H(+). Functionally, catalyzes the 2-thiolation of uridine at the wobble position (U34) of tRNA, leading to the formation of s(2)U34. This chain is tRNA-specific 2-thiouridylase MnmA, found in Haemophilus influenzae (strain 86-028NP).